The sequence spans 146 residues: Snaclec mucetin subunit beta (146 aa).

The signal sequence occupies residues Met-1 to Ala-23. Cystine bridges form between Cys-27-Cys-38, Cys-55-Cys-144, and Cys-121-Cys-136. The region spanning Tyr-34 to Lys-145 is the C-type lectin domain.

This sequence belongs to the snaclec family. As to quaternary structure, dimer and tetramer of heterodimers of alpha and beta subunits ((alphabeta)(2) and (alphabeta)(4)); disulfide-linked. These two multimeric forms are found. The complex is glycosylated. Expressed by the venom gland.

Its subcellular location is the secreted. In terms of biological role, potent platelet activator that acts via GPIb (GP1BA/GP1BB). After activation by the toxin, the receptor is redistributed on platelet surface thanks to cytoskeletal translocation. The indirect activation of integrin alpha-IIb/beta-3 (ITGA2B/ITGB3) also induced by the toxin is downstream the cytoskeletal translocation of GPIb. The chain is Snaclec mucetin subunit beta from Protobothrops mucrosquamatus (Taiwan habu).